A 604-amino-acid chain; its full sequence is Matrix metalloproteinase-21 (604 aa).

The signal sequence occupies residues 1 to 22 (MPSIKLLVWCCLCVISPRLCHS). A propeptide spanning residues 23 to 180 (EKLFHSRDRS…PDPPKIRRKR (158 aa)) is cleaved from the precursor. The segment at 132–175 (KPRCGVPDNQMAKKETEKPTAAQSLENKTKDSENVTQQNPDPPK) is disordered. The Cysteine switch signature appears at 133 to 140 (PRCGVPDN). C135 is a binding site for Zn(2+). N-linked (GlcNAc...) asparagine glycans are attached at residues N158 and N165. H318 is a Zn(2+) binding site. E319 is an active-site residue. 2 residues coordinate Zn(2+): H322 and H328. Cysteines 364 and 595 form a disulfide. Hemopexin repeat units follow at residues 365 to 424 (EGPF…WHGI), 426 to 482 (VQNI…FPGI), 483 to 531 (PSPI…FPAV), and 538 to 594 (KGNI…WFDI). N404 and N407 each carry an N-linked (GlcNAc...) asparagine glycan.

It belongs to the peptidase M10A family. It depends on Zn(2+) as a cofactor. Ca(2+) is required as a cofactor. In terms of processing, the precursor is cleaved by a furin endopeptidase.

It is found in the secreted. Its function is as follows. Plays a specialized role in the generation of left-right asymmetry during embryogenesis. May act as a negative regulator of the NOTCH-signaling pathway. The sequence is that of Matrix metalloproteinase-21 (mmp21) from Xenopus laevis (African clawed frog).